Consider the following 843-residue polypeptide: Receptor-like serine/threonine-protein kinase SD1-7 (843 aa).

The N-terminal stretch at 1-31 (MRSVPNYHHSFFIFLILILFLAFSVSPNTLS) is a signal peptide. Positions 32 to 151 (ATESLTISSN…NNRLLWQSFD (120 aa)) constitute a Bulb-type lectin domain. Residues 32-435 (ATESLTISSN…LEDKRIKNEK (404 aa)) are Extracellular-facing. N-linked (GlcNAc...) asparagine glycosylation is found at Asn-41, Asn-92, Asn-116, Asn-236, and Asn-251. One can recognise an EGF-like; atypical domain in the interval 286–322 (PKDLCDNYKVCGNFGYCDSNSLPNCYCIKGFKPVNEQ). 4 disulfide bridges follow: Cys-290-Cys-302, Cys-296-Cys-310, Cys-372-Cys-397, and Cys-376-Cys-382. Residues 341–422 (CDGRDGFTRL…GGQDLYVRLA (82 aa)) form the PAN domain. Asn-381 carries an N-linked (GlcNAc...) asparagine glycan. A helical membrane pass occupies residues 436–456 (IIGSSIGVSILLLLSFVIFHF). Residues 457–843 (WKRKQKRSIT…QITLSVIDAR (387 aa)) are Cytoplasmic-facing. In terms of domain architecture, Protein kinase spans 519–809 (FSNDNKLGQG…AIPQPKRPGF (291 aa)). ATP is bound by residues 525–533 (LGQGGFGIV) and Lys-547. A Phosphoserine modification is found at Ser-553. Residues 608-625 (TRSSNLNWQKRFDIINGI) form a caM-binding region. Residue Asp-644 is the Proton acceptor of the active site. Phosphoserine is present on residues Ser-648 and Ser-661. At Thr-678 the chain carries Phosphothreonine. At Ser-820 the chain carries Phosphoserine.

Belongs to the protein kinase superfamily. Ser/Thr protein kinase family. In terms of assembly, interacts with PUB9, PUB13, PUB14 and PUB38. Post-translationally, autophosphorylated on serine and threonine residues. Mostly expressed in leaves, and, to a lower extent, in stems and flower buds.

It localises to the cell membrane. The catalysed reaction is L-seryl-[protein] + ATP = O-phospho-L-seryl-[protein] + ADP + H(+). It catalyses the reaction L-threonyl-[protein] + ATP = O-phospho-L-threonyl-[protein] + ADP + H(+). Functionally, involved in the regulation of cellular expansion and differentiation. Mediates subcellular relocalization of PUB9 from nucleus to plasma membrane in a protein-phosphorylation-dependent manner. May be involved in the abscisic acid-mediated signaling pathway, at least during germination. This Arabidopsis thaliana (Mouse-ear cress) protein is Receptor-like serine/threonine-protein kinase SD1-7 (SD17).